The chain runs to 177 residues: Ureidoglycolate lyase (177 aa).

Belongs to the ureidoglycolate lyase family. In terms of assembly, homodimer. It depends on Ni(2+) as a cofactor.

The catalysed reaction is (S)-ureidoglycolate = urea + glyoxylate. Its pathway is nitrogen metabolism; (S)-allantoin degradation. Functionally, catalyzes the catabolism of the allantoin degradation intermediate (S)-ureidoglycolate, generating urea and glyoxylate. Involved in the utilization of allantoin as nitrogen source. This Burkholderia cepacia (Pseudomonas cepacia) protein is Ureidoglycolate lyase.